The chain runs to 149 residues: NPC intracellular cholesterol transporter 2 (149 aa).

Positions 1–19 (MRFLAATILLLALVAASQA) are cleaved as a signal peptide. 3 disulfide bridges follow: Cys-27–Cys-140, Cys-42–Cys-47, and Cys-93–Cys-99. N-linked (GlcNAc...) asparagine glycosylation is found at Asn-58 and Asn-69. Lys-116 is subject to N6-acetyllysine.

The protein belongs to the NPC2 family. Interacts with NPC1 (via the second lumenal domain) in a cholestrol-dependent manner. Interacts with NUS1/NgBR, the interaction stabilizes NCP2 and regulates cholesterol trafficking. Interacts with DHDDS. Interacts with NEDD4L (via C2 domain). Interacts with NPC1L1. N-glycosylated. As to expression, detected in liver and bile. Detected in epididymis (at protein level). Detected in caput epididymis, corpus epididymis, cauda epididymis and ovary.

The protein localises to the secreted. The protein resides in the endoplasmic reticulum. It localises to the lysosome. The catalysed reaction is cholesterol(in) = cholesterol(out). Functionally, intracellular cholesterol transporter which acts in concert with NPC1 and plays an important role in the egress of cholesterol from the lysosomal compartment. Unesterified cholesterol that has been released from LDLs in the lumen of the late endosomes/lysosomes is transferred by NPC2 to the cholesterol-binding pocket in the N-terminal domain of NPC1. May bind and mobilize cholesterol that is associated with membranes. NPC2 binds cholesterol with a 1:1 stoichiometry. Can bind a variety of sterols, including lathosterol, desmosterol and the plant sterols stigmasterol and beta-sitosterol. The secreted form of NCP2 regulates biliary cholesterol secretion via stimulation of ABCG5/ABCG8-mediated cholesterol transport. This is NPC intracellular cholesterol transporter 2 from Mus musculus (Mouse).